We begin with the raw amino-acid sequence, 530 residues long: Inactive ubiquitin carboxyl-terminal hydrolase 17-like protein 8 (530 aa).

Residues Ala80–Lys375 form the USP domain. A compositionally biased stretch (basic and acidic residues) spans Ser382 to Arg392. 2 disordered regions span residues Ser382–His412 and Asn493–Gln530. Over residues Thr495–Gly510 the composition is skewed to polar residues. Over residues Arg511–Arg524 the composition is skewed to basic residues.

This sequence belongs to the peptidase C19 family. USP17 subfamily.

It localises to the nucleus. Its subcellular location is the endoplasmic reticulum. The sequence is that of Inactive ubiquitin carboxyl-terminal hydrolase 17-like protein 8 (USP17L8) from Homo sapiens (Human).